The sequence spans 378 residues: Metacaspase-1B (378 aa).

A disordered region spans residues 1–70; that stretch reads MCSPPPYPPQ…QEAQSFGGGA (70 aa). Residues 10–29 are compositionally biased toward low complexity; sequence QGHHYPPSPHGSYYSPTPYG. Residues His-169 and Cys-225 contribute to the active site.

The protein belongs to the peptidase C14B family.

Its function is as follows. Involved in cell death (apoptosis). This Aspergillus terreus (strain NIH 2624 / FGSC A1156) protein is Metacaspase-1B (casB).